A 90-amino-acid polypeptide reads, in one-letter code: Putative antitoxin VapB8 (90 aa).

The disordered stretch occupies residues 1–56 (MEKSRCHAVAHGGGCAGSAKSHKSGGRCGQGRGAGDSHGTRGAGRRYRAASAPHPL). A compositionally biased stretch (gly residues) spans 26-36 (GRCGQGRGAGD).

In terms of biological role, antitoxin component of a possible type II toxin-antitoxin (TA) system. The cognate toxin is VapC8. This Mycobacterium tuberculosis (strain ATCC 25618 / H37Rv) protein is Putative antitoxin VapB8 (vapB8).